The sequence spans 162 residues: Caveolin-2 (162 aa).

The Cytoplasmic segment spans residues 1–86 (MGLESEKADV…FEISKYVLYK (86 aa)). A Phosphotyrosine modification is found at Tyr19. 3 positions are modified to phosphoserine: Ser20, Ser23, and Ser36. The segment at residues 87 to 107 (FLTFFLAIPLAFAAGILFAIL) is an intramembrane region (helical). Residues 108–162 (SCLHIWIIMPFVKTCLMVLPSVQTIWKSVTDVVIAPLCTSVGRSFSSVSLQLSQD) lie on the Cytoplasmic side of the membrane.

This sequence belongs to the caveolin family. Monomer or homodimer. Interacts with CAV1; the interaction forms a stable heterooligomeric complex that is required for targeting to lipid rafts and for caveolae formation. Tyrosine phosphorylated forms do not form heterooligomers with the Tyr-19-phosphorylated form existing as a monomer or dimer. Interacts (tyrosine phosphorylated form) with the SH2 domain-containing proteins, RASA1, NCK1 and SRC. Interacts (tyrosine phosphorylated form) with INSR. Interacts (Tyr-19 phosphorylated form) with MAPK1 (phosphorylated form); the interaction, promoted by insulin, leads to nuclear location and MAPK1 activation. Interacts with STAT3; the interaction is increased on insulin-induced tyrosine phosphorylation leading to STAT activation. Post-translationally, phosphorylated on serine and tyrosine residues. CAV1 promotes phosphorylation on Ser-23 which then targets the complex to the plasma membrane, lipid rafts and caveolae. Phosphorylation on Ser-36 appears to modulate mitosis in endothelial cells. Phosphorylation on Tyr-19 is required for insulin-induced phosphorylation of MAPK1 and DNA binding of STAT3. Tyrosine phosphorylation is induced by both EGF and insulin.

It localises to the nucleus. The protein localises to the golgi apparatus membrane. The protein resides in the cell membrane. Its subcellular location is the membrane. It is found in the caveola. May act as a scaffolding protein within caveolar membranes. Interacts directly with G-protein alpha subunits and can functionally regulate their activity. Acts as an accessory protein in conjunction with CAV1 in targeting to lipid rafts and driving caveolae formation. The Ser-36 phosphorylated form has a role in modulating mitosis in endothelial cells. Positive regulator of cellular mitogenesis of the MAPK signaling pathway. Required for the insulin-stimulated nuclear translocation and activation of MAPK1 and STAT3, and the subsequent regulation of cell cycle progression. In Echinops telfairi (Lesser hedgehog tenrec), this protein is Caveolin-2 (CAV2).